The primary structure comprises 447 residues: Methylenetetrahydrofolate--tRNA-(uracil-5-)-methyltransferase TrmFO (447 aa).

13-18 (GAGLAG) contacts FAD.

Belongs to the MnmG family. TrmFO subfamily. FAD serves as cofactor.

It is found in the cytoplasm. The enzyme catalyses uridine(54) in tRNA + (6R)-5,10-methylene-5,6,7,8-tetrahydrofolate + NADH + H(+) = 5-methyluridine(54) in tRNA + (6S)-5,6,7,8-tetrahydrofolate + NAD(+). It carries out the reaction uridine(54) in tRNA + (6R)-5,10-methylene-5,6,7,8-tetrahydrofolate + NADPH + H(+) = 5-methyluridine(54) in tRNA + (6S)-5,6,7,8-tetrahydrofolate + NADP(+). Functionally, catalyzes the folate-dependent formation of 5-methyl-uridine at position 54 (M-5-U54) in all tRNAs. This Streptococcus thermophilus (strain ATCC BAA-491 / LMD-9) protein is Methylenetetrahydrofolate--tRNA-(uracil-5-)-methyltransferase TrmFO.